Here is a 372-residue protein sequence, read N- to C-terminus: Probable peptidoglycan glycosyltransferase FtsW (372 aa).

Over 1-12 (MQKKSTISWSYD) the chain is Cytoplasmic. The chain crosses the membrane as a helical span at residues 13–33 (AWIVICTLSLLALGLLMVASA). Topologically, residues 34–45 (SMVISDRQFGYP) are periplasmic. The chain crosses the membrane as a helical span at residues 46-66 (FHYFIRHLIYLSLGLTLAWVA). Topologically, residues 67–77 (SRVPIKVWKTY) are cytoplasmic. The chain crosses the membrane as a helical span at residues 78–98 (SGYLFLVGFLLLILVLAPVIG). Residues 99 to 109 (KTVNGSRRWIQ) lie on the Periplasmic side of the membrane. Residues 110–130 (LGFISLQVSEVVKFVTILYLA) traverse the membrane as a helical segment. Over 131-142 (SFLQRYQSEVQK) the chain is Cytoplasmic. The helical transmembrane segment at 143 to 163 (ELKGFLKPMLLVGILSGLLLL) threads the bilayer. Residues 164-165 (EP) lie on the Periplasmic side of the membrane. Residues 166 to 186 (DFGAAVVITMTCLALLFLAGV) traverse the membrane as a helical segment. Position 187 (Arg187) is a topological domain, cytoplasmic. The chain crosses the membrane as a helical span at residues 188–208 (LWPFCVLLVLVAGSLILLAIL). Residues 209 to 277 (SPYRLQRLTS…LFAVLAEELG (69 aa)) are Periplasmic-facing. A helical transmembrane segment spans residues 278-298 (LIGEILLMGLFVLLIGRIILI). The Cytoplasmic segment spans residues 299–315 (GRRAENSNQLYSAYLAY). Residues 316-336 (GIALWLGLQVIINIGVTAGVL) form a helical membrane-spanning segment. Residues 337 to 342 (PTKGLT) lie on the Periplasmic side of the membrane. The chain crosses the membrane as a helical span at residues 343 to 363 (LPFISYGGSSLLMNCLAIGVI). At 364–372 (LRIAYETEN) the chain is on the cytoplasmic side.

Belongs to the SEDS family. FtsW subfamily.

It localises to the cell inner membrane. The catalysed reaction is [GlcNAc-(1-&gt;4)-Mur2Ac(oyl-L-Ala-gamma-D-Glu-L-Lys-D-Ala-D-Ala)](n)-di-trans,octa-cis-undecaprenyl diphosphate + beta-D-GlcNAc-(1-&gt;4)-Mur2Ac(oyl-L-Ala-gamma-D-Glu-L-Lys-D-Ala-D-Ala)-di-trans,octa-cis-undecaprenyl diphosphate = [GlcNAc-(1-&gt;4)-Mur2Ac(oyl-L-Ala-gamma-D-Glu-L-Lys-D-Ala-D-Ala)](n+1)-di-trans,octa-cis-undecaprenyl diphosphate + di-trans,octa-cis-undecaprenyl diphosphate + H(+). It functions in the pathway cell wall biogenesis; peptidoglycan biosynthesis. Functionally, peptidoglycan polymerase that is essential for cell division. This chain is Probable peptidoglycan glycosyltransferase FtsW, found in Coxiella burnetii (strain RSA 493 / Nine Mile phase I).